A 285-amino-acid polypeptide reads, in one-letter code: Glutamate racemase (285 aa).

Residues 28–29 (DS) and 60–61 (YG) each bind substrate. Cys-92 acts as the Proton donor/acceptor in catalysis. 93 to 94 (NT) lines the substrate pocket. UDP-N-acetyl-alpha-D-muramoyl-L-alanine contacts are provided by residues Arg-104 and 113 to 119 (GVVPAIK). The Proton donor/acceptor role is filled by Cys-204. 205–206 (TH) contributes to the substrate binding site.

It belongs to the aspartate/glutamate racemases family. Monomer.

The catalysed reaction is L-glutamate = D-glutamate. It participates in cell wall biogenesis; peptidoglycan biosynthesis. Its activity is regulated as follows. The low basal catalytic activity in increased 1000-fold in the presence of UDP-MurNAc-L-Ala, the product of the preceding enzyme in the peptidoglycan biosynthesis. Its function is as follows. Provides the (R)-glutamate required for cell wall biosynthesis. This chain is Glutamate racemase, found in Escherichia coli (strain K12).